A 353-amino-acid chain; its full sequence is Endophilin-A3 (353 aa).

Residues 1–21 (MSVAGLKKQFHKASQLFSEKI) are membrane-binding amphipathic helix. The BAR domain occupies 18–249 (SEKISGAEGT…LQNRINVASS (232 aa)). The tract at residues 60–87 (PNPAYRAKLGMLNTMSKIRGQVKTTGYP) is required for dimerization upon membrane association. A coiled-coil region spans residues 180-201 (DEEVKQAVEKFEESKELAERSM). The segment at 218 to 254 (FVEAALDYHKQSTEILEDLQSKLQNRINVASSRPKRE) is interaction with ARC. Positions 291 to 350 (VDQPCCQALYDFEPENEGELGFKEGDIITLTNQIDENWYEGMLNGESGFFPHNYVEVMVP) constitute an SH3 domain.

Belongs to the endophilin family. In terms of assembly, interacts with ARC. Interacts with SYNJ1 and DNM1. Highest level in a region associated with endocytosis of yolk proteins in developing oocytes (at protein level). Highest level in small ovarian follicles. High levels in brain and testis. Lower level in adrenal glands.

It is found in the cytoplasm. Its subcellular location is the early endosome membrane. In terms of biological role, implicated in endocytosis. May recruit other proteins to membranes with high curvature. Implicated in endocytosis of yolk proteins during oogenesis. The protein is Endophilin-A3 of Gallus gallus (Chicken).